A 443-amino-acid polypeptide reads, in one-letter code: Xaa-Pro dipeptidase (443 aa).

The Mn(2+) site is built by aspartate 246, aspartate 257, histidine 339, glutamate 384, and glutamate 423.

It belongs to the peptidase M24B family. Bacterial-type prolidase subfamily. Requires Mn(2+) as cofactor.

The enzyme catalyses Xaa-L-Pro dipeptide + H2O = an L-alpha-amino acid + L-proline. Functionally, splits dipeptides with a prolyl residue in the C-terminal position. In Klebsiella pneumoniae (strain 342), this protein is Xaa-Pro dipeptidase.